A 434-amino-acid polypeptide reads, in one-letter code: CBL-interacting protein kinase 15 (434 aa).

The Protein kinase domain maps to 12-267 (YELGRLLGKG…IQKIKESTWF (256 aa)). ATP contacts are provided by residues 18 to 26 (LGKGTFGKV) and lysine 41. Aspartate 135 functions as the Proton acceptor in the catalytic mechanism. Positions 153-182 (DFGLSALSESKRQDGLLHTTCGTPAYVAPE) are activation loop. Positions 298 to 333 (RKKNAHEDVKPMSVTNLNAFEIISFSKGFDLSGMFI) constitute an NAF domain. Positions 338–367 (RNEARFTSDKSASTIISKLEDVAKALNLRV) are PPI.

The protein belongs to the protein kinase superfamily. CAMK Ser/Thr protein kinase family. SNF1 subfamily. Mn(2+) serves as cofactor.

It carries out the reaction L-seryl-[protein] + ATP = O-phospho-L-seryl-[protein] + ADP + H(+). The enzyme catalyses L-threonyl-[protein] + ATP = O-phospho-L-threonyl-[protein] + ADP + H(+). Functionally, involved in salt stress tolerance. CIPK serine-threonine protein kinases interact with CBL proteins. Binding of a CBL protein to the regulatory NAF domain of CIPK protein lead to the activation of the kinase in a calcium-dependent manner. In Oryza sativa subsp. japonica (Rice), this protein is CBL-interacting protein kinase 15 (CIPK15).